The chain runs to 626 residues: Phosphomethylpyrimidine synthase (626 aa).

Residues 1–22 (MTKQEKAINLSESAQVDQQSVQ) form a disordered region. Positions 10-22 (LSESAQVDQQSVQ) are enriched in polar residues. Substrate contacts are provided by residues N232, M261, Y290, H326, 346–348 (SRG), 387–390 (DGLR), and E426. H430 is a binding site for Zn(2+). Y453 contributes to the substrate binding site. H494 is a binding site for Zn(2+). 3 residues coordinate [4Fe-4S] cluster: C574, C577, and C582.

The protein belongs to the ThiC family. As to quaternary structure, homodimer. The cofactor is [4Fe-4S] cluster.

It catalyses the reaction 5-amino-1-(5-phospho-beta-D-ribosyl)imidazole + S-adenosyl-L-methionine = 4-amino-2-methyl-5-(phosphooxymethyl)pyrimidine + CO + 5'-deoxyadenosine + formate + L-methionine + 3 H(+). The protein operates within cofactor biosynthesis; thiamine diphosphate biosynthesis. Its function is as follows. Catalyzes the synthesis of the hydroxymethylpyrimidine phosphate (HMP-P) moiety of thiamine from aminoimidazole ribotide (AIR) in a radical S-adenosyl-L-methionine (SAM)-dependent reaction. This chain is Phosphomethylpyrimidine synthase, found in Pseudomonas putida (strain ATCC 47054 / DSM 6125 / CFBP 8728 / NCIMB 11950 / KT2440).